A 351-amino-acid polypeptide reads, in one-letter code: Photosystem II D2 protein (351 aa).

A helical membrane pass occupies residues 39–59 (CAYLAVGGWLTGTTFVTSWYT). Histidine 116 provides a ligand contact to chlorophyll a. A helical transmembrane segment spans residues 123-139 (GFCLRQFEIARLVGLRP). Pheophytin a is bound by residues glutamine 128 and asparagine 141. The helical transmembrane segment at 151 to 164 (VFVSVFLMYPLGQA) threads the bilayer. Histidine 196 contacts chlorophyll a. A helical transmembrane segment spans residues 206 to 226 (GALLCAIHGATVQNTLFEDGD). Residues histidine 213 and phenylalanine 260 each coordinate a plastoquinone. Histidine 213 contacts Fe cation. Histidine 267 is a Fe cation binding site. The helical transmembrane segment at 277 to 293 (GLWTSAFGIVGLALNLR) threads the bilayer.

Belongs to the reaction center PufL/M/PsbA/D family. In terms of assembly, PSII is composed of 1 copy each of membrane proteins PsbA, PsbB, PsbC, PsbD, PsbE, PsbF, PsbH, PsbI, PsbJ, PsbK, PsbL, PsbM, PsbT, PsbX, PsbY, PsbZ, Psb30/Ycf12, at least 3 peripheral proteins of the oxygen-evolving complex and a large number of cofactors. It forms dimeric complexes. Requires The D1/D2 heterodimer binds P680, chlorophylls that are the primary electron donor of PSII, and subsequent electron acceptors. It shares a non-heme iron and each subunit binds pheophytin, quinone, additional chlorophylls, carotenoids and lipids. There is also a Cl(-1) ion associated with D1 and D2, which is required for oxygen evolution. The PSII complex binds additional chlorophylls, carotenoids and specific lipids. as cofactor.

The protein resides in the plastid. It localises to the chloroplast thylakoid membrane. It carries out the reaction 2 a plastoquinone + 4 hnu + 2 H2O = 2 a plastoquinol + O2. Its function is as follows. Photosystem II (PSII) is a light-driven water:plastoquinone oxidoreductase that uses light energy to abstract electrons from H(2)O, generating O(2) and a proton gradient subsequently used for ATP formation. It consists of a core antenna complex that captures photons, and an electron transfer chain that converts photonic excitation into a charge separation. The D1/D2 (PsbA/PsbD) reaction center heterodimer binds P680, the primary electron donor of PSII as well as several subsequent electron acceptors. D2 is needed for assembly of a stable PSII complex. This is Photosystem II D2 protein from Porphyra purpurea (Red seaweed).